A 461-amino-acid chain; its full sequence is tRNA-2-methylthio-N(6)-dimethylallyladenosine synthase (461 aa).

The MTTase N-terminal domain occupies Pro-25–Ser-143. Residues Cys-34, Cys-70, Cys-104, Cys-179, Cys-183, and Cys-186 each coordinate [4Fe-4S] cluster. Residues Arg-165–Glu-395 form the Radical SAM core domain. Positions Lys-398–Asp-461 constitute a TRAM domain.

It belongs to the methylthiotransferase family. MiaB subfamily. In terms of assembly, monomer. The cofactor is [4Fe-4S] cluster.

The protein resides in the cytoplasm. The enzyme catalyses N(6)-dimethylallyladenosine(37) in tRNA + (sulfur carrier)-SH + AH2 + 2 S-adenosyl-L-methionine = 2-methylsulfanyl-N(6)-dimethylallyladenosine(37) in tRNA + (sulfur carrier)-H + 5'-deoxyadenosine + L-methionine + A + S-adenosyl-L-homocysteine + 2 H(+). Functionally, catalyzes the methylthiolation of N6-(dimethylallyl)adenosine (i(6)A), leading to the formation of 2-methylthio-N6-(dimethylallyl)adenosine (ms(2)i(6)A) at position 37 in tRNAs that read codons beginning with uridine. The sequence is that of tRNA-2-methylthio-N(6)-dimethylallyladenosine synthase from Finegoldia magna (strain ATCC 29328 / DSM 20472 / WAL 2508) (Peptostreptococcus magnus).